The sequence spans 870 residues: DNA polymerase kappa (870 aa).

Positions 103–358 constitute a UmuC domain; it reads IVHIDMDAFY…LPIRKVSGIG (256 aa). Mg(2+)-binding residues include D107, D198, and E199. 2 UBZ4-type zinc fingers span residues 621–651 and 776–806; these read ILTC…DGPS and ALVC…NKSF. Zn(2+)-binding residues include C624, C627, H642, C646, C779, C782, H797, and C801. A disordered region spans residues 816-858; that stretch reads NPVNQPKESSRSTGSSSGVQKAVTRTKRPGLMTKYSTSKKIKP.

The protein belongs to the DNA polymerase type-Y family. Interacts with REV1. Interacts with PCNA. Mg(2+) serves as cofactor. Mn(2+) is required as a cofactor. As to expression, detected at low levels in testis, spleen, prostate and ovary. Detected at very low levels in kidney, colon, brain, heart, liver, lung, placenta, pancreas and peripheral blood leukocytes.

It localises to the nucleus. It catalyses the reaction DNA(n) + a 2'-deoxyribonucleoside 5'-triphosphate = DNA(n+1) + diphosphate. In terms of biological role, DNA polymerase specifically involved in DNA repair. Plays an important role in translesion synthesis, where the normal high-fidelity DNA polymerases cannot proceed and DNA synthesis stalls. Depending on the context, it inserts the correct base, but causes frequent base transitions, transversions and frameshifts. Lacks 3'-5' proofreading exonuclease activity. Forms a Schiff base with 5'-deoxyribose phosphate at abasic sites, but does not have lyase activity. The protein is DNA polymerase kappa (POLK) of Homo sapiens (Human).